The following is an 871-amino-acid chain: Metabotropic glutamate receptor 6 (871 aa).

The first 23 residues, 1–23 (MGRLRVLLLWLAWWLSQAGIAHG), serve as a signal peptide directing secretion. At 24 to 579 (AGSVRLAGGL…VVRLTWSSPW (556 aa)) the chain is on the extracellular side. Cysteine 51 and cysteine 93 are disulfide-bonded. L-glutamate is bound by residues serine 148, 169–171 (AST), and tyrosine 219. Cystine bridges form between cysteine 238-cysteine 530, cysteine 361-cysteine 377, cysteine 417-cysteine 424, cysteine 512-cysteine 531, cysteine 516-cysteine 534, cysteine 537-cysteine 549, and cysteine 552-cysteine 565. Asparagine 290 carries N-linked (GlcNAc...) asparagine glycosylation. Aspartate 301 lines the L-glutamate pocket. Lysine 394 contacts L-glutamate. 2 N-linked (GlcNAc...) asparagine glycosylation sites follow: asparagine 445 and asparagine 473. N-linked (GlcNAc...) asparagine glycosylation occurs at asparagine 561. A helical membrane pass occupies residues 580–602 (AALPLLLAVLGIMATTTIIATFM). Over 603-616 (RHNDTPIVRASGRE) the chain is Cytoplasmic. The chain crosses the membrane as a helical span at residues 617–637 (LSYVLLTGIFLIYAITFLMVA). Residues 638–648 (EPCAAVCASRR) lie on the Extracellular side of the membrane. The helical transmembrane segment at 649-667 (LLLGLGTTLSYSALLTKTN) threads the bilayer. Over 668 to 691 (RIYRIFEQGKRSVTPPPFISPTSQ) the chain is Cytoplasmic. The helical transmembrane segment at 692-712 (LVITFGLTSLQVVGVIAWLGA) threads the bilayer. Residues 713–742 (QPPHSVIDYEEQRTVDPEQARGVLKCDMSD) are Extracellular-facing. Residues 743–764 (LSLIGCLGYSLLLMVTCTVYAI) form a helical membrane-spanning segment. At 765–777 (KARGVPETFNEAK) the chain is on the cytoplasmic side. A helical transmembrane segment spans residues 778–800 (PIGFTMYTTCIIWLAFVPIFFGT). Topologically, residues 801 to 813 (AQSAEKIYIQTTT) are extracellular. A helical membrane pass occupies residues 814 to 839 (LTVSLSLSASVSLGMLYVPKTYVILF). The Cytoplasmic segment spans residues 840–871 (HPEQNVQKRKRSLKKTSTMAAPPKSENSEDAK). The interval 848–871 (RKRSLKKTSTMAAPPKSENSEDAK) is disordered.

It belongs to the G-protein coupled receptor 3 family. As to quaternary structure, homodimer. Interacts with GPR179. Interacts with photoreceptor synaptic protein LRIT1 (via its N-terminal extracellular domain). Detected in the outer plexiform layer in retina (at protein level).

It is found in the cell membrane. Its subcellular location is the endoplasmic reticulum membrane. The protein resides in the golgi apparatus membrane. It localises to the cell projection. The protein localises to the dendrite. In terms of biological role, G-protein coupled receptor for glutamate. Ligand binding causes a conformation change that triggers signaling via guanine nucleotide-binding proteins (G proteins) and modulates the activity of down-stream effectors, such as adenylate cyclase. Signaling inhibits adenylate cyclase activity. Signaling stimulates TRPM1 channel activity and Ca(2+) uptake. Required for normal vision. This chain is Metabotropic glutamate receptor 6 (Grm6), found in Mus musculus (Mouse).